Consider the following 273-residue polypeptide: uncharacterized protein (273 aa).

2 consecutive transmembrane segments (helical) span residues valine 24–leucine 44 and isoleucine 103–alanine 123. The segment at serine 132–arginine 194 is disordered. Residues serine 164–threonine 179 are compositionally biased toward basic residues. Over residues threonine 183–proline 192 the composition is skewed to low complexity.

It localises to the cell membrane. This is an uncharacterized protein from Sinorhizobium fredii (strain NBRC 101917 / NGR234).